A 345-amino-acid polypeptide reads, in one-letter code: Biotin synthase (345 aa).

A Radical SAM core domain is found at 60–287; sequence NQVQLSTLLS…RTMVRLSAGR (228 aa). [4Fe-4S] cluster-binding residues include Cys75, Cys79, and Cys82. Residues Cys119, Cys150, Cys210, and Arg282 each coordinate [2Fe-2S] cluster.

It belongs to the radical SAM superfamily. Biotin synthase family. As to quaternary structure, homodimer. The cofactor is [4Fe-4S] cluster. It depends on [2Fe-2S] cluster as a cofactor.

It catalyses the reaction (4R,5S)-dethiobiotin + (sulfur carrier)-SH + 2 reduced [2Fe-2S]-[ferredoxin] + 2 S-adenosyl-L-methionine = (sulfur carrier)-H + biotin + 2 5'-deoxyadenosine + 2 L-methionine + 2 oxidized [2Fe-2S]-[ferredoxin]. It functions in the pathway cofactor biosynthesis; biotin biosynthesis; biotin from 7,8-diaminononanoate: step 2/2. Functionally, catalyzes the conversion of dethiobiotin (DTB) to biotin by the insertion of a sulfur atom into dethiobiotin via a radical-based mechanism. The chain is Biotin synthase from Polaromonas naphthalenivorans (strain CJ2).